Consider the following 200-residue polypeptide: 3-isopropylmalate dehydratase small subunit (200 aa).

This sequence belongs to the LeuD family. LeuD type 1 subfamily. As to quaternary structure, heterodimer of LeuC and LeuD.

The enzyme catalyses (2R,3S)-3-isopropylmalate = (2S)-2-isopropylmalate. The protein operates within amino-acid biosynthesis; L-leucine biosynthesis; L-leucine from 3-methyl-2-oxobutanoate: step 2/4. In terms of biological role, catalyzes the isomerization between 2-isopropylmalate and 3-isopropylmalate, via the formation of 2-isopropylmaleate. The chain is 3-isopropylmalate dehydratase small subunit from Arthrobacter sp. (strain FB24).